Here is a 168-residue protein sequence, read N- to C-terminus: Large ribosomal subunit protein uL10 (168 aa).

This sequence belongs to the universal ribosomal protein uL10 family. In terms of assembly, part of the ribosomal stalk of the 50S ribosomal subunit. The N-terminus interacts with L11 and the large rRNA to form the base of the stalk. The C-terminus forms an elongated spine to which L12 dimers bind in a sequential fashion forming a multimeric L10(L12)X complex.

Its function is as follows. Forms part of the ribosomal stalk, playing a central role in the interaction of the ribosome with GTP-bound translation factors. This is Large ribosomal subunit protein uL10 from Paracidovorax citrulli (strain AAC00-1) (Acidovorax citrulli).